We begin with the raw amino-acid sequence, 619 residues long: Phosphomethylpyrimidine synthase (619 aa).

Polar residues predominate over residues 1–11; sequence MHEQRSLTMNA. A disordered region spans residues 1–25; it reads MHEQRSLTMNALTPAVSTGPLPASR. Residues Asn-220, Met-249, Tyr-278, His-314, 334 to 336, 375 to 378, and Glu-414 each bind substrate; these read SRG and DGLR. His-418 is a binding site for Zn(2+). Tyr-441 is a substrate binding site. His-482 is a binding site for Zn(2+). 3 residues coordinate [4Fe-4S] cluster: Cys-562, Cys-565, and Cys-570.

Belongs to the ThiC family. In terms of assembly, homodimer. Requires [4Fe-4S] cluster as cofactor.

The catalysed reaction is 5-amino-1-(5-phospho-beta-D-ribosyl)imidazole + S-adenosyl-L-methionine = 4-amino-2-methyl-5-(phosphooxymethyl)pyrimidine + CO + 5'-deoxyadenosine + formate + L-methionine + 3 H(+). The protein operates within cofactor biosynthesis; thiamine diphosphate biosynthesis. Functionally, catalyzes the synthesis of the hydroxymethylpyrimidine phosphate (HMP-P) moiety of thiamine from aminoimidazole ribotide (AIR) in a radical S-adenosyl-L-methionine (SAM)-dependent reaction. This chain is Phosphomethylpyrimidine synthase, found in Mesorhizobium japonicum (strain LMG 29417 / CECT 9101 / MAFF 303099) (Mesorhizobium loti (strain MAFF 303099)).